Here is a 351-residue protein sequence, read N- to C-terminus: uncharacterized protein (351 aa).

Mn(2+) is bound by residues Asp-215, Asp-226, His-290, Glu-319, and Glu-333.

Belongs to the peptidase M24B family. Requires Mn(2+) as cofactor.

This is an uncharacterized protein from Staphylococcus aureus (strain bovine RF122 / ET3-1).